The chain runs to 331 residues: Biotin synthase (331 aa).

Residues 40 to 269 enclose the Radical SAM core domain; it reads YRVQLASLLS…HARVRLSAGR (230 aa). Residues Cys55, Cys59, and Cys62 each contribute to the [4Fe-4S] cluster site. 4 residues coordinate [2Fe-2S] cluster: Cys100, Cys132, Cys192, and Arg264.

This sequence belongs to the radical SAM superfamily. Biotin synthase family. As to quaternary structure, homodimer. The cofactor is [4Fe-4S] cluster. Requires [2Fe-2S] cluster as cofactor.

It carries out the reaction (4R,5S)-dethiobiotin + (sulfur carrier)-SH + 2 reduced [2Fe-2S]-[ferredoxin] + 2 S-adenosyl-L-methionine = (sulfur carrier)-H + biotin + 2 5'-deoxyadenosine + 2 L-methionine + 2 oxidized [2Fe-2S]-[ferredoxin]. Its pathway is cofactor biosynthesis; biotin biosynthesis; biotin from 7,8-diaminononanoate: step 2/2. Its function is as follows. Catalyzes the conversion of dethiobiotin (DTB) to biotin by the insertion of a sulfur atom into dethiobiotin via a radical-based mechanism. The polypeptide is Biotin synthase (Synechococcus sp. (strain CC9605)).